Reading from the N-terminus, the 417-residue chain is Guanine nucleotide-exchange factor SEC12 (417 aa).

Residues 1-388 (MGRRRGVELY…QLHLLPSRRS (388 aa)) lie on the Cytoplasmic side of the membrane. Tyr10 is modified (3'-nitrotyrosine). A disordered region spans residues 101–135 (KGSKAEKSGSKEQGPRQRKGAAPAEKKSGAEVHPE). 2 stretches are compositionally biased toward basic and acidic residues: residues 103 to 115 (SKAE…EQGP) and 124 to 135 (AEKKSGAEVHPE). WD repeat units lie at residues 152 to 191 (STEP…KVLE), 194 to 232 (AHEG…TQLQ), and 298 to 337 (CGHE…RLYY). A helical membrane pass occupies residues 389–409 (VPVWLLLLLCVGLIIVTILLL). Residues 410–417 (QSAFPGFL) lie on the Lumenal side of the membrane.

As to quaternary structure, interacts with SAR1B (GDP-bound form). Interacts with MIA2; recruits PREB to endoplasmic reticulum exit sites. Interacts with CIDEB; facilitating loading of SCAP-SREBP into COPII vesicles.

The protein localises to the endoplasmic reticulum membrane. The protein resides in the nucleus. In terms of biological role, guanine nucleotide exchange factor (GEF) that regulates the assembly of the coat protein complex II/COPII in endoplasmic reticulum (ER) to Golgi vesicle-mediated transport. Selectively activates SAR1A and SAR1B by promoting the exchange of guanosine diphosphate (GDP) for guanosine triphosphate (GTP) in these small GTPases. In their activated GTP-bound state, SAR1A and SAR1B insert into the membrane of the endoplasmic reticulum where they recruit the remainder of the coat protein complex II/COPII which is responsible for both the sorting of proteins and the deformation and budding of membranes into vesicles destined to the Golgi. Was first identified based on its probable role in the regulation of pituitary gene transcription. Binds to the prolactin gene (PRL) promoter and seems to activate transcription. This Rattus norvegicus (Rat) protein is Guanine nucleotide-exchange factor SEC12.